Here is a 598-residue protein sequence, read N- to C-terminus: Thiol:disulfide interchange protein DsbD (598 aa).

A signal peptide spans 1-21 (MRALLTFFVAGLLVLSSPAMA). Residues Cys130 and Cys136 are joined by a disulfide bond. Positions 158–180 (TMPTQTASPLDTSTANTSTPQPL) are disordered. Residues 159–180 (MPTQTASPLDTSTANTSTPQPL) show a composition bias toward polar residues. Transmembrane regions (helical) follow at residues 198–220 (LLFL…YPIL), 240–262 (LVYV…SAGL), 274–296 (LIGL…TLQL), 324–346 (AISG…LYVA), 353–375 (TGGV…VAVF), 385–407 (GWMD…FLLE), 414–431 (WSTA…GWLY), and 446–468 (AVGI…YWFA). Cys212 and Cys333 are disulfide-bonded. The Thioredoxin domain occupies 456-598 (FASAQPALNY…FLEHIQRISN (143 aa)). Cys513 and Cys516 are joined by a disulfide.

This sequence belongs to the thioredoxin family. DsbD subfamily.

It localises to the cell inner membrane. It catalyses the reaction [protein]-dithiol + NAD(+) = [protein]-disulfide + NADH + H(+). It carries out the reaction [protein]-dithiol + NADP(+) = [protein]-disulfide + NADPH + H(+). Functionally, required to facilitate the formation of correct disulfide bonds in some periplasmic proteins and for the assembly of the periplasmic c-type cytochromes. Acts by transferring electrons from cytoplasmic thioredoxin to the periplasm. This transfer involves a cascade of disulfide bond formation and reduction steps. In Vibrio vulnificus (strain YJ016), this protein is Thiol:disulfide interchange protein DsbD.